The chain runs to 183 residues: MEAQSATETQKNLKTLMELIKTKRPFKSSDFDTLNLDYLSGQSNEELFKLLIDAINGMKENVAKVNEYLTEEGDHSLSGDELLKFVYKELVYDDESEFDKEKLQKLYKTFSEDSNAFATLQSYIQYLQPEENSQRWIQVHEPVKHRRRLNHNPALRVASPTEQSRCPISRRVVWIPSSVLNPQ.

This Babesia bovis protein is Gene BABR protein 2.